The chain runs to 387 residues: 23S rRNA (uracil(747)-C(5))-methyltransferase RlmC (387 aa).

[4Fe-4S] cluster is bound by residues Cys3, Cys11, Cys14, and Cys86. Positions 211, 240, 269, and 319 each coordinate S-adenosyl-L-methionine. Cys346 (nucleophile) is an active-site residue.

The protein belongs to the class I-like SAM-binding methyltransferase superfamily. RNA M5U methyltransferase family. RlmC subfamily.

It carries out the reaction uridine(747) in 23S rRNA + S-adenosyl-L-methionine = 5-methyluridine(747) in 23S rRNA + S-adenosyl-L-homocysteine + H(+). Catalyzes the formation of 5-methyl-uridine at position 747 (m5U747) in 23S rRNA. This is 23S rRNA (uracil(747)-C(5))-methyltransferase RlmC from Pasteurella multocida (strain Pm70).